The primary structure comprises 267 residues: V-type proton ATPase subunit D (267 aa).

It belongs to the V-ATPase D subunit family. In terms of assembly, V-ATPase is a heteromultimeric enzyme composed of a peripheral catalytic V1 complex (components A to H) attached to an integral membrane V0 proton pore complex (components: a, c, c', c'', d, e, f and VOA1).

It localises to the vacuole membrane. Subunit of the V1 complex of vacuolar(H+)-ATPase (V-ATPase), a multisubunit enzyme composed of a peripheral complex (V1) that hydrolyzes ATP and a membrane integral complex (V0) that translocates protons. V-ATPase is responsible for acidifying and maintaining the pH of intracellular compartments. The chain is V-type proton ATPase subunit D (VMA8) from Candida albicans (strain SC5314 / ATCC MYA-2876) (Yeast).